The primary structure comprises 722 residues: Zinc finger protein 219 (722 aa).

The segment at 1-21 is disordered; that stretch reads MEGSRPRAPSGHLAPSPPAFD. Residue Ser-16 is modified to Phosphoserine. 2 consecutive C2H2-type zinc fingers follow at residues 57-79 and 85-107; these read FPCP…LRAH and FQCP…LRTH. Positions 137 to 160 are disordered; sequence ARSSGGMQATPATEGLARPQAPSS. C2H2-type zinc fingers lie at residues 163–186 and 189–212; these read FRCP…HILH and WKCG…LTAH. The segment at 215-275 is disordered; that stretch reads PERPLAATSA…EEPPAPPEFR (61 aa). 2 stretches are compositionally biased toward pro residues: residues 225-247 and 259-272; these read APPP…PQPE and TPAP…PAPP. 2 C2H2-type zinc fingers span residues 274–296 and 302–324; these read FRCQ…MRKH and HACP…MKVH. The interval 384 to 495 is disordered; it reads LRAGEGRPNG…GTRPEGGRGA (112 aa). Residues 390-404 show a composition bias toward gly residues; sequence RPNGEGAEPGPGRSF. The span at 425 to 438 shows a compositional bias: acidic residues; the sequence is EPEEEEEVVEAEEE. Over residues 463–477 the composition is skewed to low complexity; it reads SASAAGAQARSTATQ. C2H2-type zinc fingers lie at residues 498–520 and 526–548; these read KDCP…LRVH and YKCP…LQRH. Disordered stretches follow at residues 542–648 and 668–722; these read KYHL…LHRC and HHSR…GQER. A compositionally biased stretch (pro residues) spans 558 to 568; the sequence is PGPPPEPPPPS. The span at 634-643 shows a compositional bias: gly residues; it reads GPGGEAGPGG. The C2H2-type 9 zinc-finger motif lies at 646 to 668; it reads HRCLFCPFATGAPELMALHLQVH. The span at 668–677 shows a compositional bias: basic residues; the sequence is HHSRRARGRR. At Ser-692 the chain carries Phosphoserine. A Phosphothreonine modification is found at Thr-695. Residue Ser-698 is modified to Phosphoserine.

It belongs to the krueppel C2H2-type zinc-finger protein family. In terms of assembly, interacts with SOX9 (via C-terminus). As to expression, ubiquitous.

It is found in the nucleus. Its function is as follows. Transcriptional regulator. Recognizes and binds 2 copies of the core DNA sequence motif 5'-GGGGG-3'. Binds to the HMGN1 promoter and may repress HMGN1 expression. Regulates SNCA expression in primary cortical neurons. Binds to the COL2A1 promoter and activates COL2A1 expression, as part of a complex with SOX9. Plays a role in chondrocyte differentiation. This Homo sapiens (Human) protein is Zinc finger protein 219 (ZNF219).